A 38-amino-acid chain; its full sequence is Antifungal protein 5 (38 aa).

The protein belongs to the plant LTP family.

Possesses potent antifungal activity against F.graminearum but not P.infestans. This Malva parviflora (Little mallow) protein is Antifungal protein 5.